Reading from the N-terminus, the 441-residue chain is Chitinase-like protein Idgf3 (441 aa).

A signal peptide spans 1-23 (MTGSLWLSLALSLAVLAQFKVSA). Positions 25–441 (PNLVCFYDSQ…MLRAIKYRLL (417 aa)) constitute a GH18 domain. An intrachain disulfide couples Cys29 to Cys56. The N-linked (GlcNAc...) asparagine glycan is linked to Asn221. A disordered region spans residues 307 to 331 (KDSGDSGMPVVPSTQGPAPAGPQSK). Cys342 and Cys425 form a disulfide bridge.

The protein belongs to the glycosyl hydrolase 18 family. IDGF subfamily. Post-translationally, glycosylated. Primarily expressed in yolk cells and fat body. In larvae, it is expressed in small and large salivary gland cells, and weakly expressed in imaginal disks. Less expressed than Idgf2 and Idgf4.

Its subcellular location is the secreted. Functionally, cooperates with insulin-like peptides to stimulate the proliferation, polarization and motility of imaginal disk cells. May act by stabilizing the binding of insulin-like peptides to its receptor through a simultaneous interaction with both molecules to form a multiprotein signaling complex. The polypeptide is Chitinase-like protein Idgf3 (Idgf3) (Drosophila melanogaster (Fruit fly)).